The chain runs to 364 residues: WAT1-related protein At3g30340 (364 aa).

A run of 10 helical transmembrane segments spans residues 9 to 29 (WKAV…NVMF), 41 to 61 (VATT…AIFL), 76 to 96 (SLFF…LIGL), 102 to 122 (TFSL…ALVF), 138 to 158 (LLGT…KGTA), 183 to 203 (WAMG…WFIV), 215 to 235 (YTST…LSLI), 251 to 271 (VLAL…GMSW), 277 to 297 (GAVF…IFSF), and 304 to 324 (IYCG…ILLW). 2 EamA domains span residues 26–152 (NVMF…LVLT) and 195–323 (IIWS…YILL).

Belongs to the drug/metabolite transporter (DMT) superfamily. Plant drug/metabolite exporter (P-DME) (TC 2.A.7.4) family.

Its subcellular location is the membrane. The polypeptide is WAT1-related protein At3g30340 (Arabidopsis thaliana (Mouse-ear cress)).